A 228-amino-acid chain; its full sequence is uncharacterized protein (228 aa).

This is an uncharacterized protein from Methanocaldococcus jannaschii (strain ATCC 43067 / DSM 2661 / JAL-1 / JCM 10045 / NBRC 100440) (Methanococcus jannaschii).